We begin with the raw amino-acid sequence, 483 residues long: V-type proton ATPase subunit H (483 aa).

2 positions are modified to phosphoserine: serine 59 and serine 483.

It belongs to the V-ATPase H subunit family. In terms of assembly, V-ATPase is a heteromultimeric enzyme made up of two complexes: the ATP-hydrolytic V1 complex and the proton translocation V0 complex. The V1 complex consists of three catalytic AB heterodimers that form a heterohexamer, three peripheral stalks each consisting of EG heterodimers, one central rotor including subunits D and F, and the regulatory subunits C and H. The proton translocation complex V0 consists of the proton transport subunit a, a ring of proteolipid subunits c9c'', rotary subunit d, subunits e and f, and the accessory subunits ATP6AP1/Ac45 and ATP6AP2/PRR. Interacts with AP2M1.

It localises to the cytoplasmic vesicle. The protein resides in the clathrin-coated vesicle membrane. Its function is as follows. Subunit of the V1 complex of vacuolar(H+)-ATPase (V-ATPase), a multisubunit enzyme composed of a peripheral complex (V1) that hydrolyzes ATP and a membrane integral complex (V0) that translocates protons. V-ATPase is responsible for acidifying and maintaining the pH of intracellular compartments and in some cell types, is targeted to the plasma membrane, where it is responsible for acidifying the extracellular environment. Subunit H is essential for V-ATPase activity, but not for the assembly of the complex. Involved in the endocytosis mediated by clathrin-coated pits, required for the formation of endosomes. This chain is V-type proton ATPase subunit H (Atp6v1h), found in Mus musculus (Mouse).